The chain runs to 210 residues: Outer-membrane lipoprotein LolB (210 aa).

Residues 1-19 (MNHLKSFFTALVAGFILTA) form the signal peptide. C20 carries the N-palmitoyl cysteine lipid modification. The S-diacylglycerol cysteine moiety is linked to residue C20.

The protein belongs to the LolB family. As to quaternary structure, monomer.

The protein resides in the cell outer membrane. Plays a critical role in the incorporation of lipoproteins in the outer membrane after they are released by the LolA protein. This chain is Outer-membrane lipoprotein LolB, found in Mannheimia succiniciproducens (strain KCTC 0769BP / MBEL55E).